Consider the following 473-residue polypeptide: Aspartyl/glutamyl-tRNA(Asn/Gln) amidotransferase subunit B (473 aa).

Belongs to the GatB/GatE family. GatB subfamily. Heterotrimer of A, B and C subunits.

It catalyses the reaction L-glutamyl-tRNA(Gln) + L-glutamine + ATP + H2O = L-glutaminyl-tRNA(Gln) + L-glutamate + ADP + phosphate + H(+). It carries out the reaction L-aspartyl-tRNA(Asn) + L-glutamine + ATP + H2O = L-asparaginyl-tRNA(Asn) + L-glutamate + ADP + phosphate + 2 H(+). In terms of biological role, allows the formation of correctly charged Asn-tRNA(Asn) or Gln-tRNA(Gln) through the transamidation of misacylated Asp-tRNA(Asn) or Glu-tRNA(Gln) in organisms which lack either or both of asparaginyl-tRNA or glutaminyl-tRNA synthetases. The reaction takes place in the presence of glutamine and ATP through an activated phospho-Asp-tRNA(Asn) or phospho-Glu-tRNA(Gln). This Finegoldia magna (strain ATCC 29328 / DSM 20472 / WAL 2508) (Peptostreptococcus magnus) protein is Aspartyl/glutamyl-tRNA(Asn/Gln) amidotransferase subunit B.